The following is a 224-amino-acid chain: Ankyrin repeat domain-containing protein 45 (224 aa).

2 ANK repeats span residues 46–76 (VGRN…DVNE) and 80–109 (RGYS…DFQA).

Widely expressed.

The protein resides in the cytoplasm. It is found in the midbody. It localises to the midbody ring. Its subcellular location is the cleavage furrow. Its function is as follows. May play a role during cell division. The sequence is that of Ankyrin repeat domain-containing protein 45 from Danio rerio (Zebrafish).